Consider the following 167-residue polypeptide: MRSPKVKFLTIFTLSILITKMSFASSACFNEAGTMFRIEPNLIKAIALVESNLKKDSIGKNRDKKNNIKSFDYGLMQINQMHIPMLKKRGIIKDERDLLDNPCLNIKIGTEILYKHFSRCGMTWQCLGTYNAGFAMDNQKKRLQYAKKIYIVYTRLNELDNRKALAK.

An N-terminal signal peptide occupies residues 1 to 24 (MRSPKVKFLTIFTLSILITKMSFA).

Belongs to the IagB/IpgF/P19 family.

The protein resides in the periplasm. This is Peptidoglycan-binding-like protein (pbl) from Escherichia coli O157:H7.